The chain runs to 868 residues: Leucine--tRNA ligase (868 aa).

The 'HIGH' region signature appears at 42–52; sequence PYPSGKLHMGH. The short motif at 627 to 631 is the 'KMSKS' region element; it reads KMSKS. K630 is a binding site for ATP.

It belongs to the class-I aminoacyl-tRNA synthetase family.

The protein localises to the cytoplasm. It carries out the reaction tRNA(Leu) + L-leucine + ATP = L-leucyl-tRNA(Leu) + AMP + diphosphate. This Pseudomonas savastanoi pv. phaseolicola (strain 1448A / Race 6) (Pseudomonas syringae pv. phaseolicola (strain 1448A / Race 6)) protein is Leucine--tRNA ligase.